A 312-amino-acid chain; its full sequence is Transcription initiation factor IIB (312 aa).

The segment at 10–42 adopts a TFIIB-type zinc-finger fold; that stretch reads FVQTCSDCGETQNIVEDYKNGYHVCGRCGCIVG. Positions 14, 17, 34, and 37 each coordinate Zn(2+). 2 repeat units span residues 120-196 and 213-290.

The protein belongs to the TFIIB family. In terms of assembly, associates with TFIID-IIA (DA complex) to form TFIID-IIA-IIB (DAB-complex) which is then recognized by polymerase II.

It localises to the nucleus. Its function is as follows. General factor that plays a major role in the activation of eukaryotic genes transcribed by RNA polymerase II. The sequence is that of Transcription initiation factor IIB from Encephalitozoon cuniculi (strain GB-M1) (Microsporidian parasite).